The sequence spans 208 residues: MMTLASLPSTAIAGLASAAPKVQPRMAANDEFAYGLPGGANILGEFDPAGFLKGKDKLEVYRLREAETTHGRVAMLASLGFVVQEKFHPLFSGDNGPAIEQIPQLPYWLWIVMTIGIGRAELFRIQKGWAKVNPETGKADSALREGYEPGDLGFDPLGLAPSDPDEFRLMQEKELSHGRLAMIAAAGFLAQEAVSGDTWGTYWGDATF.

A chloroplast-targeting transit peptide spans 1-31 (MMTLASLPSTAIAGLASAAPKVQPRMAANDE). A helical membrane pass occupies residues 102-118 (IPQLPYWLWIVMTIGIG).

The protein belongs to the fucoxanthin chlorophyll protein family. In terms of assembly, the LHC complex of chromophytic algae is composed of fucoxanthin, chlorophyll A and C bound non-covalently by fucoxanthin chlorophyll proteins (FCPs). The ratio of pigments in this LHC is; fucoxanthin: chlorophyll C: chlorophyll A; (0.6-1): (0.1-0.3): (1).

The protein localises to the plastid. Its subcellular location is the chloroplast thylakoid membrane. Its function is as follows. The light-harvesting complex (LHC) functions as a light receptor, it captures and delivers excitation energy to photosystems with which it is closely associated. Energy is transferred from the carotenoid and chlorophyll C (or B) to chlorophyll A and the photosynthetic reaction centers where it is used to synthesize ATP and reducing power. This is Fucoxanthin-chlorophyll a-c binding protein, chloroplastic (FCP) from Isochrysis galbana (Marine planktonic alga).